Consider the following 432-residue polypeptide: Neuronal pentraxin-1 (432 aa).

A signal peptide spans 1 to 22; sequence MLAGRAARTCALLALCLLGSGA. A disordered region spans residues 88-122; the sequence is RCESQSTLDSGPGEARSGGGRKQPGSGKNTMGDLS. 2 N-linked (GlcNAc...) asparagine glycosylation sites follow: Asn154 and Asn193. The Pentraxin (PTX) domain occupies 226–428; the sequence is DKFQLTFPLR…GATKWTFEAC (203 aa). A disulfide bridge connects residues Cys256 and Cys316. Residues Asn280, Glu358, Gln359, Asp360, and Gln370 each contribute to the Ca(2+) site.

Homooligomer or heterooligomer (probably pentamer) with neuronal pentraxin receptor (NPTXR). The cofactor is Ca(2+). Expressed in brain and kidney.

The protein localises to the secreted. It localises to the cytoplasmic vesicle. It is found in the secretory vesicle. Its subcellular location is the endoplasmic reticulum. Functionally, may be involved in mediating uptake of synaptic material during synapse remodeling or in mediating the synaptic clustering of AMPA glutamate receptors at a subset of excitatory synapses. The chain is Neuronal pentraxin-1 (Nptx1) from Mus musculus (Mouse).